Reading from the N-terminus, the 241-residue chain is Transforming protein p29 (241 aa).

The disordered stretch occupies residues 1–41; that stretch reads MPAARAAPAADEPMRDPVAPVRAPALPRPAPGAVAPASGGA. 2 S-palmitoyl cysteine; by host lipidation sites follow: Cys-233 and Cys-236. At Cys-238 the chain carries Cysteine methyl ester; by host. Cys-238 carries S-farnesyl cysteine; by host lipidation. Residues 239–241 constitute a propeptide, removed in mature form; sequence VLS.

It belongs to the small GTPase superfamily. Ras family.

The protein localises to the host cell membrane. The enzyme catalyses GTP + H2O = GDP + phosphate + H(+). Its activity is regulated as follows. Alternates between an inactive form bound to GDP and an active form bound to GTP. Activated by a guanine nucleotide-exchange factor (GEF) and inactivated by a GTPase-activating protein (GAP). The sequence is that of Transforming protein p29 (H-RAS) from Mus musculus (Mouse).